The chain runs to 426 residues: Enolase (426 aa).

The tract at residues 38 to 60 (PSGASTGAHEAVEKRDGDKSRYG) is disordered. A compositionally biased stretch (basic and acidic residues) spans 47-58 (EAVEKRDGDKSR). Position 163 (Gln-163) interacts with (2R)-2-phosphoglycerate. The Proton donor role is filled by Glu-205. Mg(2+) contacts are provided by Asp-242, Glu-285, and Asp-312. Residues Lys-337, Arg-366, Ser-367, and Lys-388 each contribute to the (2R)-2-phosphoglycerate site. Lys-337 functions as the Proton acceptor in the catalytic mechanism.

It belongs to the enolase family. The cofactor is Mg(2+).

It is found in the cytoplasm. It localises to the secreted. Its subcellular location is the cell surface. The catalysed reaction is (2R)-2-phosphoglycerate = phosphoenolpyruvate + H2O. It participates in carbohydrate degradation; glycolysis; pyruvate from D-glyceraldehyde 3-phosphate: step 4/5. Functionally, catalyzes the reversible conversion of 2-phosphoglycerate (2-PG) into phosphoenolpyruvate (PEP). It is essential for the degradation of carbohydrates via glycolysis. In Caulobacter sp. (strain K31), this protein is Enolase.